The primary structure comprises 349 residues: Protein POOR HOMOLOGOUS SYNAPSIS 1 (349 aa).

It is found in the cytoplasm. In terms of biological role, required for accurate chromosome segregation in meiosis. Required for pairing to occur between homologous chromosomes. Acts in early recombination steps and ensures pairing fidelity and proper repair of meiotic DNA double-strand-breaks. Regulates recombination and pairing of homologous chromosomes during meiotic prophase by controlling transport of RAD50 from cytoplasm to the nucleus. May affect pairing of the gene-rich fraction of the genome rather than preventing pairing between repetitive DNA elements. The polypeptide is Protein POOR HOMOLOGOUS SYNAPSIS 1 (Arabidopsis thaliana (Mouse-ear cress)).